Here is a 436-residue protein sequence, read N- to C-terminus: Histidinol dehydrogenase (436 aa).

Positions 136, 198, and 221 each coordinate NAD(+). Substrate-binding residues include serine 244, glutamine 266, and histidine 269. Zn(2+)-binding residues include glutamine 266 and histidine 269. Catalysis depends on proton acceptor residues glutamate 334 and histidine 335. Substrate contacts are provided by histidine 335, aspartate 368, glutamate 422, and histidine 427. Aspartate 368 serves as a coordination point for Zn(2+). A Zn(2+)-binding site is contributed by histidine 427.

Belongs to the histidinol dehydrogenase family. Zn(2+) serves as cofactor.

It carries out the reaction L-histidinol + 2 NAD(+) + H2O = L-histidine + 2 NADH + 3 H(+). It functions in the pathway amino-acid biosynthesis; L-histidine biosynthesis; L-histidine from 5-phospho-alpha-D-ribose 1-diphosphate: step 9/9. In terms of biological role, catalyzes the sequential NAD-dependent oxidations of L-histidinol to L-histidinaldehyde and then to L-histidine. This is Histidinol dehydrogenase from Dehalococcoides mccartyi (strain CBDB1).